The sequence spans 161 residues: Allophycocyanin alpha subunit (161 aa).

A (2R,3E)-phycocyanobilin-binding site is contributed by Cys-81.

It belongs to the phycobiliprotein family. In terms of assembly, heterodimer of an alpha and a beta chain. In terms of processing, contains one covalently linked phycocyanobilin chromophore. The chromophore on position 81 is added by the phycocyanobilin lyase CpcUS.

It localises to the cellular thylakoid membrane. In terms of biological role, light-harvesting photosynthetic bile pigment-protein from the phycobiliprotein complex. Allophycocyanin has a maximum absorption at approximately 650 nanometers. This Picosynechococcus sp. (strain ATCC 27264 / PCC 7002 / PR-6) (Agmenellum quadruplicatum) protein is Allophycocyanin alpha subunit (apcA).